A 366-amino-acid polypeptide reads, in one-letter code: Chorismate synthase (366 aa).

The NADP(+) site is built by Arg48 and Arg54. Residues 132 to 134 (RSS), 244 to 245 (NA), Gly289, 304 to 308 (KPTSS), and Arg330 each bind FMN.

Belongs to the chorismate synthase family. As to quaternary structure, homotetramer. Requires FMNH2 as cofactor.

It carries out the reaction 5-O-(1-carboxyvinyl)-3-phosphoshikimate = chorismate + phosphate. Its pathway is metabolic intermediate biosynthesis; chorismate biosynthesis; chorismate from D-erythrose 4-phosphate and phosphoenolpyruvate: step 7/7. In terms of biological role, catalyzes the anti-1,4-elimination of the C-3 phosphate and the C-6 proR hydrogen from 5-enolpyruvylshikimate-3-phosphate (EPSP) to yield chorismate, which is the branch point compound that serves as the starting substrate for the three terminal pathways of aromatic amino acid biosynthesis. This reaction introduces a second double bond into the aromatic ring system. This Methylorubrum extorquens (strain PA1) (Methylobacterium extorquens) protein is Chorismate synthase.